The primary structure comprises 609 residues: MALSDHSRQLLDTLNKQRQSGFLCDCTILIGDFHFKAHRNVLASFSDYFRAYFKDSLDSIVLLDQIKVTPSGFQTLLDFIYSGNLNYDSCNLEEINLAAQHLRLEDVVATCRTKIESLVGLTKPSVTHLAPTSSSLDENEYFTSLYPREAMKVDAIEISYSQSKVKKGIKGKKSQKIKRWKRPLRSHQHVKKKSSKCQLSSPKTPAVLSLDAKELELMAADHVAKDNTCLLSFTSEIDCEIFLSQNISLETATMTQQKPAKLQQDCAMKEHCISNIADITNVCTMEGCDKELDPKYSKNKPVCNTCGKVFSEASSLRRHMRIHKGVKPYVCHLCAKAFTQCNQLKTHVRTHTGEKPYQCKKCDKGFAQKCQLVFHSRMHHGEEKPYKCDVCNLQFATSSNLKIHARKHSGEKPYVCDRCGQRFAQASTLTYHVRRHTGEKPYVCDTCGKAFAVSSSLITHARKHTGEKPYICGVCRKSFISSGELNKHFRSHTGERPFVCEVCGNSYTDVKNLKKHKLKMHKGSEEAIEMKSAENSSSSEDSTTKSPEPESLELKPSDLFLPLTLHISPDDPQMLLPVSDNRGLSSETLLRASVPSYSEPQFIFLQQMY.

The BTB domain occupies 24 to 89; it reads CDCTILIGDF…IYSGNLNYDS (66 aa). Short sequence motifs (nuclear localization signal) lie at residues 172 to 188 and 257 to 262; these read KKSQKIKRWKRPLRSHQ and QKPAKL. 8 C2H2-type zinc fingers span residues 301-323, 329-351, 357-380, 386-408, 414-436, 442-464, 470-492, and 498-521; these read PVCNTCGKVFSEASSLRRHMRIH, YVCHLCAKAFTQCNQLKTHVRTH, YQCKKCDKGFAQKCQLVFHSRMHH, YKCDVCNLQFATSSNLKIHARKH, YVCDRCGQRFAQASTLTYHVRRH, YVCDTCGKAFAVSSSLITHARKH, YICGVCRKSFISSGELNKHFRSH, and FVCEVCGNSYTDVKNLKKHKLKMH. A disordered region spans residues 528 to 553; sequence IEMKSAENSSSSEDSTTKSPEPESLE. The segment covering 533 to 546 has biased composition (low complexity); sequence AENSSSSEDSTTKS.

The protein localises to the nucleus. The chain is Myoneurin (mynn) from Xenopus laevis (African clawed frog).